The sequence spans 200 residues: Ubiquitin-conjugating enzyme E2 K (200 aa).

Ala-2 is subject to N-acetylalanine. A UBC core domain is found at 4 to 154 (IAVQRIKREF…ARLWAHVYAG (151 aa)). The residue at position 14 (Lys-14) is an N6-acetyllysine; alternate. Lys-14 is covalently cross-linked (Glycyl lysine isopeptide (Lys-Gly) (interchain with G-Cter in SUMO); alternate). Lys-14 is covalently cross-linked (Glycyl lysine isopeptide (Lys-Gly) (interchain with G-Cter in SUMO1); alternate). Cys-92 serves as the catalytic Glycyl thioester intermediate. The residue at position 159 (Ser-159) is a Phosphoserine. The UBA domain occupies 160–200 (PEYTKKIENLCAMGFDRNAVIVALSSKSWDVETATELLLSN).

It belongs to the ubiquitin-conjugating enzyme family. Interacts with RNF138/NARF. Interacts with BRCA1. Post-translationally, sumoylation at Lys-14 impairs catalytic activity.

It localises to the cytoplasm. The enzyme catalyses S-ubiquitinyl-[E1 ubiquitin-activating enzyme]-L-cysteine + [E2 ubiquitin-conjugating enzyme]-L-cysteine = [E1 ubiquitin-activating enzyme]-L-cysteine + S-ubiquitinyl-[E2 ubiquitin-conjugating enzyme]-L-cysteine.. It functions in the pathway protein modification; protein ubiquitination. Its function is as follows. Accepts ubiquitin from the E1 complex and catalyzes its covalent attachment to other proteins. In vitro, in the presence or in the absence of BRCA1-BARD1 E3 ubiquitin-protein ligase complex, catalyzes the synthesis of 'Lys-48'-linked polyubiquitin chains. Does not transfer ubiquitin directly to but elongates monoubiquitinated substrate protein. Mediates the selective degradation of short-lived and abnormal proteins, such as the endoplasmic reticulum-associated degradation (ERAD) of misfolded lumenal proteins. Ubiquitinates huntingtin. May mediate foam cell formation by the suppression of apoptosis of lipid-bearing macrophages through ubiquitination and subsequence degradation of p53/TP53. Proposed to be involved in ubiquitination and proteolytic processing of NF-kappa-B; in vitro supports ubiquitination of NFKB1. The chain is Ubiquitin-conjugating enzyme E2 K (UBE2K) from Bos taurus (Bovine).